The chain runs to 643 residues: ATP-dependent RNA helicase DeaD (643 aa).

Positions 6–34 (TTFADLGLKAPILEALTDLGYEKPSPIQA) match the Q motif motif. In terms of domain architecture, Helicase ATP-binding spans 37-208 (IPHLLDGRDV…RRFMKEPQEV (172 aa)). ATP is bound at residue 50–57 (AQTGSGKT). A DEAD box motif is present at residues 156-159 (DEAD). The Helicase C-terminal domain occupies 232 to 379 (KNEALVRFLE…EVELPNAELL (148 aa)). 2 disordered regions span residues 440-482 (VPPV…KRER) and 557-643 (MNMQ…GGDA). 2 stretches are compositionally biased toward basic and acidic residues: residues 448-482 (PRRE…KRER) and 567-643 (PRTE…GGDA).

This sequence belongs to the DEAD box helicase family. DeaD/CsdA subfamily.

The protein resides in the cytoplasm. The enzyme catalyses ATP + H2O = ADP + phosphate + H(+). Its function is as follows. DEAD-box RNA helicase involved in various cellular processes at low temperature, including ribosome biogenesis, mRNA degradation and translation initiation. The sequence is that of ATP-dependent RNA helicase DeaD from Klebsiella pneumoniae.